We begin with the raw amino-acid sequence, 335 residues long: Homeobox protein unc-39 (335 aa).

Disordered stretches follow at residues 27 to 56 and 269 to 294; these read FTSS…GGPP and RRQR…NGGS. The span at 28-41 shows a compositional bias: low complexity; it reads TSSSNSNTSNSSTS. A compositionally biased stretch (polar residues) spans 42–53; that stretch reads PSHISDQFSSSG. The segment at residues 225 to 277 is a DNA-binding region (homeobox); that stretch reads KDSSRKFLKQFFRNVSEYPTQEQKREISRATGLKIVQISNWFKNRRQRDKSNN. Positions 276-294 are enriched in low complexity; it reads NNSAKCSPPSSSSSTNGGS.

The protein belongs to the SIX/Sine oculis homeobox family.

It is found in the nucleus. Its function is as follows. Probable transcription factor required for differentiation and migration of neuronal cells, such as RID and CAN neurons. Specifically, plays a role in the terminal differentiation of RID peptidergic neurons. Also required for CAN neuron axon guidance. This is Homeobox protein unc-39 from Caenorhabditis elegans.